Consider the following 292-residue polypeptide: Elongation factor Ts (292 aa).

The involved in Mg(2+) ion dislocation from EF-Tu stretch occupies residues 80–83; it reads TDSV.

Belongs to the EF-Ts family.

Its subcellular location is the cytoplasm. Its function is as follows. Associates with the EF-Tu.GDP complex and induces the exchange of GDP to GTP. It remains bound to the aminoacyl-tRNA.EF-Tu.GTP complex up to the GTP hydrolysis stage on the ribosome. The protein is Elongation factor Ts of Lactiplantibacillus plantarum (strain ATCC BAA-793 / NCIMB 8826 / WCFS1) (Lactobacillus plantarum).